Here is a 380-residue protein sequence, read N- to C-terminus: Cytochrome b (380 aa).

Helical transmembrane passes span 34-54 (FGSL…LLAM), 78-99 (WLIR…YLHI), 114-134 (WNTG…GYVL), and 179-199 (FFAL…IHLT). Positions 84 and 98 each coordinate heme b. Positions 183 and 197 each coordinate heme b. An a ubiquinone-binding site is contributed by histidine 202. 4 helical membrane passes run 227-247 (LKDI…ALFS), 289-309 (LGGV…PFLH), 321-341 (LSQL…WVGS), and 348-368 (FIII…ILFP).

The protein belongs to the cytochrome b family. As to quaternary structure, the cytochrome bc1 complex contains 11 subunits: 3 respiratory subunits (MT-CYB, CYC1 and UQCRFS1), 2 core proteins (UQCRC1 and UQCRC2) and 6 low-molecular weight proteins (UQCRH/QCR6, UQCRB/QCR7, UQCRQ/QCR8, UQCR10/QCR9, UQCR11/QCR10 and a cleavage product of UQCRFS1). This cytochrome bc1 complex then forms a dimer. Requires heme b as cofactor.

The protein localises to the mitochondrion inner membrane. Functionally, component of the ubiquinol-cytochrome c reductase complex (complex III or cytochrome b-c1 complex) that is part of the mitochondrial respiratory chain. The b-c1 complex mediates electron transfer from ubiquinol to cytochrome c. Contributes to the generation of a proton gradient across the mitochondrial membrane that is then used for ATP synthesis. This is Cytochrome b (MT-CYB) from Calonectris leucomelas (Streaked shearwater).